Consider the following 346-residue polypeptide: Serpentine receptor class beta-11 (346 aa).

The next 7 membrane-spanning stretches (helical) occupy residues 26 to 46 (YQMIISFCSVFPLIYFLLFKL), 57 to 77 (TIFISYFVSLVAFSMTHLTTS), 102 to 122 (IWNFFILFFLTLSTFFPCSVT), 139 to 159 (SVVMGPILVGFNVLLNFCIIF), 186 to 206 (FTFFIIIFFVNLVDVIFDLIL), 239 to 259 (VFLILIHIISFGIYVSAVVFF), and 278 to 298 (TFSTTIVPTYNFVIGSFSSFF).

The protein belongs to the nematode receptor-like protein srb family.

The protein localises to the membrane. This is Serpentine receptor class beta-11 (srb-11) from Caenorhabditis elegans.